We begin with the raw amino-acid sequence, 433 residues long: MIIIEKTEQIKGTINAPPSKSYTHRAVICASLADGTSEIISPLNSADCLSSVHGAMMLGAEIDATDKNKWVVVGNNNSPKTPNNVVDIGNSGTTLRILTGIASQIPEGYAILTGDSSIITRPMQPLLDALNQLGIRAFSSKTDGTAPIIVEHGEIKNNVVKIRGDMSSQFITSLMMTMPFSKMDSTIELTTPLKSAPYLDITIDVLDKFGVKIEKVKNKNKLTKFIIKGNQKYKPYSYTVEGDCSSASYFIAAGVLMNSDITINNIFKNSKQGDREIVNIVKKMGAPIIEEEDKIIIKGPYKLKGIDIDVKDTPDLVPTIAILGCFAEGTTTIYNGEHVRLKECDRLMACAKELTKMGAKITEKPDGLIIEGVGKLNGAEMETYHDHRLVMAFTVAGMMAEGKTIIKGEDAVKISFPNFVEAIKSIGANITIK.

Positions 20, 21, and 25 each coordinate 3-phosphoshikimate. Lys20 provides a ligand contact to phosphoenolpyruvate. Residues Gly92 and Arg121 each coordinate phosphoenolpyruvate. 3-phosphoshikimate-binding residues include Ser167, Ser168, Gln169, Ser195, Asp315, and Lys342. Residue Gln169 coordinates phosphoenolpyruvate. Asp315 (proton acceptor) is an active-site residue. Positions 346 and 388 each coordinate phosphoenolpyruvate.

It belongs to the EPSP synthase family. Monomer.

Its subcellular location is the cytoplasm. The enzyme catalyses 3-phosphoshikimate + phosphoenolpyruvate = 5-O-(1-carboxyvinyl)-3-phosphoshikimate + phosphate. It participates in metabolic intermediate biosynthesis; chorismate biosynthesis. Catalyzes the transfer of the enolpyruvyl moiety of phosphoenolpyruvate (PEP) to the 5-hydroxyl of shikimate-3-phosphate (S3P) to produce enolpyruvyl shikimate-3-phosphate and inorganic phosphate. This chain is 3-phosphoshikimate 1-carboxyvinyltransferase, found in Methanococcus aeolicus (strain ATCC BAA-1280 / DSM 17508 / OCM 812 / Nankai-3).